The following is a 256-amino-acid chain: Protein FixA (256 aa).

The protein belongs to the ETF beta-subunit/FixA family. As to quaternary structure, heterodimer of FixA and FixB.

It functions in the pathway amine and polyamine metabolism; carnitine metabolism. Its function is as follows. Required for anaerobic carnitine reduction. May bring reductant to CaiA. The sequence is that of Protein FixA from Escherichia coli O81 (strain ED1a).